The following is a 111-amino-acid chain: Cornifelin homolog A (111 aa).

It belongs to the cornifelin family.

This Xenopus laevis (African clawed frog) protein is Cornifelin homolog A (cnfn-a).